The primary structure comprises 316 residues: Membrane protein UL148 (316 aa).

The N-terminal stretch at 1–20 (MLRLLFTLVLLALYGPSVDA) is a signal peptide. Residues 286–308 (FIVQYLNTLLITMMAAIWARVLI) form a helical membrane-spanning segment.

Interacts with host SEL1L.

It localises to the host endoplasmic reticulum membrane. Functionally, chaperone protein that plays an important role in HCMV tropism. Cooperates with UL116 to regulate the abundance of gH-gL complexes in virion. Favors the incorporation of gL into virions once UL116 has regulated the early folding steps of virion assembly. Interacts with the host ERAD machinery and slows gO decay which would otherwise be constitutively degraded. Reorganizes the host endoplasmic reticulum and activates the unfolded protein response. Additionally, plays a role in the evasion of antiviral immune response by down-regulating cell surface expression of host CD58. Mechanistically, interacts with host CD58 and retains its immature form intracellularly. The capacity to cause endoplasmic reticulum reorganization and the intracellular retention of host CD58 are functionally independent properties. This is Membrane protein UL148 (UL148) from Human cytomegalovirus (strain Merlin) (HHV-5).